A 321-amino-acid polypeptide reads, in one-letter code: Gap junction delta-2 protein (321 aa).

Over 1-19 (MGEWTILERLLEAAVQQHS) the chain is Cytoplasmic. The helical transmembrane segment at 20 to 42 (TMIGRILLTVVVIFRILIVAIVG) threads the bilayer. Residues 43–75 (ETVYDDEQTMFVCNTLQPGCNQACYDRAFPISH) are Extracellular-facing. A helical membrane pass occupies residues 76–98 (IRYWVFQIIMVCTPSLCFITYSV). Residues 99–197 (HQSAKQRERR…KLRRQEGISR (99 aa)) lie on the Cytoplasmic side of the membrane. Residues 120–141 (PAESIGGPGGTGGGGSGGSKRE) form a disordered region. Over residues 125–137 (GGPGGTGGGGSGG) the composition is skewed to gly residues. A helical membrane pass occupies residues 198 to 220 (FYIIQVVFRNALEIGFLVGQYFL). The Extracellular segment spans residues 221 to 252 (YGFSVPGLYECNRYPCIKEVECYVSRPTEKTV). A helical membrane pass occupies residues 253 to 275 (FLVFMFAVSGICVVLNLAELNHL). The Cytoplasmic portion of the chain corresponds to 276-321 (GWRKIKLAVRGAQAKRKSVYEIRNKDLPRVSVPNFGRTQSSDSAYV).

The protein belongs to the connexin family. Delta-type subfamily. A connexon is composed of a hexamer of connexins. In terms of tissue distribution, highly expressed in neurons.

The protein resides in the cell membrane. Its subcellular location is the cell junction. The protein localises to the gap junction. One gap junction consists of a cluster of closely packed pairs of transmembrane channels, the connexons, through which materials of low MW diffuse from one cell to a neighboring cell. In Mus musculus (Mouse), this protein is Gap junction delta-2 protein (Gjd2).